The primary structure comprises 158 residues: Eukaryotic translation initiation factor 5A (158 aa).

Lys-51 is subject to Hypusine.

The protein belongs to the eIF-5A family. Post-translationally, lys-51 undergoes hypusination, a unique post-translational modification that consists in the addition of a butylamino group from spermidine to lysine side chain, leading to the formation of the unusual amino acid hypusine. eIF-5As are the only known proteins to undergo this modification, which is essential for their function.

The protein localises to the cytoplasm. Its function is as follows. Translation factor that promotes translation elongation and termination, particularly upon ribosome stalling at specific amino acid sequence contexts. Binds between the exit (E) and peptidyl (P) site of the ribosome and promotes rescue of stalled ribosome: specifically required for efficient translation of polyproline-containing peptides as well as other motifs that stall the ribosome. Acts as a ribosome quality control (RQC) cofactor by joining the RQC complex to facilitate peptidyl transfer during CAT tailing step. This chain is Eukaryotic translation initiation factor 5A (ANB1), found in Candida albicans (strain SC5314 / ATCC MYA-2876) (Yeast).